The primary structure comprises 548 residues: Chaperonin GroEL (548 aa).

ATP contacts are provided by residues 30–33 (TLGP), K51, 87–91 (DGTTT), G415, 479–481 (NAA), and D495. Residues 526-548 (REDKSSDVASSPAGGMGGMGGMM) form a disordered region. Residues 539–548 (GGMGGMGGMM) show a composition bias toward gly residues.

Belongs to the chaperonin (HSP60) family. In terms of assembly, forms a cylinder of 14 subunits composed of two heptameric rings stacked back-to-back. Interacts with the co-chaperonin GroES.

Its subcellular location is the cytoplasm. It carries out the reaction ATP + H2O + a folded polypeptide = ADP + phosphate + an unfolded polypeptide.. Functionally, together with its co-chaperonin GroES, plays an essential role in assisting protein folding. The GroEL-GroES system forms a nano-cage that allows encapsulation of the non-native substrate proteins and provides a physical environment optimized to promote and accelerate protein folding. The chain is Chaperonin GroEL from Buchnera aphidicola subsp. Schizaphis graminum (strain Sg).